We begin with the raw amino-acid sequence, 431 residues long: 3-phosphoshikimate 1-carboxyvinyltransferase (431 aa).

3-phosphoshikimate contacts are provided by lysine 22, serine 23, and arginine 27. Residue lysine 22 participates in phosphoenolpyruvate binding. Phosphoenolpyruvate contacts are provided by glycine 94 and arginine 122. Positions 167, 169, 315, and 342 each coordinate 3-phosphoshikimate. Glutamine 169 is a phosphoenolpyruvate binding site. Aspartate 315 acts as the Proton acceptor in catalysis. The phosphoenolpyruvate site is built by arginine 346 and arginine 388.

This sequence belongs to the EPSP synthase family. As to quaternary structure, monomer.

Its subcellular location is the cytoplasm. The catalysed reaction is 3-phosphoshikimate + phosphoenolpyruvate = 5-O-(1-carboxyvinyl)-3-phosphoshikimate + phosphate. It functions in the pathway metabolic intermediate biosynthesis; chorismate biosynthesis; chorismate from D-erythrose 4-phosphate and phosphoenolpyruvate: step 6/7. In terms of biological role, catalyzes the transfer of the enolpyruvyl moiety of phosphoenolpyruvate (PEP) to the 5-hydroxyl of shikimate-3-phosphate (S3P) to produce enolpyruvyl shikimate-3-phosphate and inorganic phosphate. This is 3-phosphoshikimate 1-carboxyvinyltransferase from Pelobacter propionicus (strain DSM 2379 / NBRC 103807 / OttBd1).